Here is a 358-residue protein sequence, read N- to C-terminus: Nuclear receptor subfamily 1 group I member 3 (358 aa).

The segment at residues 18–93 (PRNCVVCGDR…VGMRKDMILS (76 aa)) is a DNA-binding region (nuclear receptor). An NR C4-type zinc finger spans residues 21–41 (CVVCGDRATGYHFHALTCEGC). At threonine 48 the chain carries Phosphothreonine; by PKC. Residues 57-81 (CPFAGRCEVSKAQRRHCPACRLQKC) form an NR C4-type zinc finger. An NR LBD domain is found at 119–358 (QQKELIQTLL…MMPLLGEICS (240 aa)).

It belongs to the nuclear hormone receptor family. NR1 subfamily. In terms of assembly, heterodimer of NR1I3 and RXR. Interacts with PSMC4. Interacts with ECT2. Directly interacts with DNAJC7; this complex may also include HSP90. Interacts with CRY1. Interacts with CRY2 in a ligand-dependent manner. Post-translationally, phosphorylated at Thr-48 by PKC, dephosphorylation of Thr-48 is required for nuclear translocation and activation.

Its subcellular location is the nucleus. It is found in the cytoplasm. The protein resides in the cytoskeleton. In terms of biological role, binds and transactivates the retinoic acid response elements that control expression of the retinoic acid receptor beta 2 and alcohol dehydrogenase 3 genes. Transactivates both the phenobarbital responsive element module of the human CYP2B6 gene and the CYP3A4 xenobiotic response element. In Rattus norvegicus (Rat), this protein is Nuclear receptor subfamily 1 group I member 3 (Nr1i3).